The sequence spans 466 residues: Anthocyanidin 3-O-glucosyltransferase 1 (466 aa).

H22 (proton acceptor) is an active-site residue. H22 and Q87 together coordinate an anthocyanidin. D122 serves as the catalytic Charge relay. Position 145 (T145) interacts with UDP-alpha-D-glucose. Position 154 (H154) interacts with an anthocyanidin. A346, Q348, H363, W366, N367, S368, and E371 together coordinate UDP-alpha-D-glucose. G386 serves as a coordination point for an anthocyanidin. UDP-alpha-D-glucose contacts are provided by D387 and Q388.

It belongs to the UDP-glycosyltransferase family. In terms of tissue distribution, highest expression detected in receptacles and achenes, with very low levels detected in runners, leaves, flowers, crowns and green receptacles.

It carries out the reaction an anthocyanidin + UDP-alpha-D-glucose + H(+) = an anthocyanidin 3-O-beta-D-glucoside + UDP. The catalysed reaction is cyanidin + UDP-alpha-D-glucose = cyanidin 3-O-beta-D-glucoside + UDP + H(+). It catalyses the reaction pelargonidin + UDP-alpha-D-glucose = pelargonidin 3-O-beta-D-glucoside + UDP. The enzyme catalyses peonidin + UDP-alpha-D-glucose = peonidin 3-O-beta-D-glucoside + UDP. It carries out the reaction delphinidin + UDP-alpha-D-glucose = delphinidin 3-O-beta-D-glucoside + UDP. The catalysed reaction is a flavonol + UDP-alpha-D-glucose = a flavonol 3-O-beta-D-glucoside + UDP + H(+). The protein operates within pigment biosynthesis; anthocyanin biosynthesis. Functionally, in the presence of other necessary color factors, this glycosylation reaction allows the accumulation of anthocyanin pigments. Uses UDP-Glc as a sugar donor, but not UDP-Gal or UDP-GlcUA. Anthocyanidins are the preferred substrates in vivo, but flavonols can also be glucosylated in vitro. The protein is Anthocyanidin 3-O-glucosyltransferase 1 of Fragaria ananassa (Strawberry).